The chain runs to 334 residues: Chorismatase (334 aa).

Residues Tyr-143, Arg-150, Tyr-203, and Arg-216 each coordinate substrate. The active-site Proton acceptor is the Glu-328.

The protein belongs to the FkbO/Hyg5 family. In terms of assembly, monomer.

It catalyses the reaction chorismate + H2O = (3R,4R)-3,4-dihydroxy-3,4-dihydrobenzoate + pyruvate. In terms of biological role, involved in the biosynthesis of the macrocyclic amino acid-linked polyketides rapamycin which is a potent immunosuppressant that prevents T-cell proliferation through initial binding to the immunophilin FKBP12. Catalyzes the hydrolysis of chorismate via a 1,4-conjugate elimination of water to yield (4R,5R)-4,5-dihydroxycyclohexa-1,5-dienecarboxylic acid (DCDC). This chain is Chorismatase (rapK), found in Streptomyces rapamycinicus (strain ATCC 29253 / DSM 41530 / NRRL 5491 / AYB-994) (Streptomyces hygroscopicus (strain ATCC 29253)).